The chain runs to 200 residues: Ribosomal RNA large subunit methyltransferase E (200 aa).

The S-adenosyl-L-methionine site is built by Gly51, Trp53, Asp71, Asp90, and Asp112. Residue Lys151 is the Proton acceptor of the active site.

The protein belongs to the class I-like SAM-binding methyltransferase superfamily. RNA methyltransferase RlmE family.

It is found in the cytoplasm. The enzyme catalyses uridine(2552) in 23S rRNA + S-adenosyl-L-methionine = 2'-O-methyluridine(2552) in 23S rRNA + S-adenosyl-L-homocysteine + H(+). Functionally, specifically methylates the uridine in position 2552 of 23S rRNA at the 2'-O position of the ribose in the fully assembled 50S ribosomal subunit. This is Ribosomal RNA large subunit methyltransferase E from Treponema pallidum (strain Nichols).